The chain runs to 344 residues: Ribosomal RNA large subunit methyltransferase Cfr (344 aa).

E88 acts as the Proton acceptor in catalysis. Residues 95 to 324 (KKGWESFCIS…HANGISVATR (230 aa)) form the Radical SAM core domain. A disulfide bridge links C102 with C335. 3 residues coordinate [4Fe-4S] cluster: C109, C113, and C116. Residues 155 to 156 (GE), S186, 209 to 211 (SLH), and N290 contribute to the S-adenosyl-L-methionine site. The active-site S-methylcysteine intermediate is the C335.

The protein belongs to the radical SAM superfamily. RlmN family. Cfr subfamily. It depends on [4Fe-4S] cluster as a cofactor.

The protein localises to the cytoplasm. The catalysed reaction is adenosine(2503) in 23S rRNA + 2 reduced [2Fe-2S]-[ferredoxin] + 2 S-adenosyl-L-methionine = 8-methyladenosine(2503) in 23S rRNA + 5'-deoxyadenosine + L-methionine + 2 oxidized [2Fe-2S]-[ferredoxin] + S-adenosyl-L-homocysteine. Its function is as follows. Specifically methylates position 8 of adenine 2503 in 23S rRNA. Confers resistance to some classes of antibiotics. This chain is Ribosomal RNA large subunit methyltransferase Cfr, found in Lachnoclostridium phytofermentans (strain ATCC 700394 / DSM 18823 / ISDg) (Clostridium phytofermentans).